Here is a 284-residue protein sequence, read N- to C-terminus: Orotidine 5'-phosphate decarboxylase (284 aa).

K95 serves as the catalytic Proton donor.

This sequence belongs to the OMP decarboxylase family. Type 2 subfamily.

The enzyme catalyses orotidine 5'-phosphate + H(+) = UMP + CO2. It participates in pyrimidine metabolism; UMP biosynthesis via de novo pathway; UMP from orotate: step 2/2. The sequence is that of Orotidine 5'-phosphate decarboxylase from Leptothrix cholodnii (strain ATCC 51168 / LMG 8142 / SP-6) (Leptothrix discophora (strain SP-6)).